The chain runs to 297 residues: Ribosomal RNA small subunit methyltransferase H (297 aa).

Residues 35 to 37 (GGH), Asp55, Phe82, Asp100, and Gln107 each bind S-adenosyl-L-methionine.

The protein belongs to the methyltransferase superfamily. RsmH family.

It is found in the cytoplasm. It carries out the reaction cytidine(1402) in 16S rRNA + S-adenosyl-L-methionine = N(4)-methylcytidine(1402) in 16S rRNA + S-adenosyl-L-homocysteine + H(+). Its function is as follows. Specifically methylates the N4 position of cytidine in position 1402 (C1402) of 16S rRNA. The protein is Ribosomal RNA small subunit methyltransferase H of Chlamydia caviae (strain ATCC VR-813 / DSM 19441 / 03DC25 / GPIC) (Chlamydophila caviae).